Here is a 323-residue protein sequence, read N- to C-terminus: uncharacterized protein (323 aa).

An N-terminal signal peptide occupies residues 1–45 (MLATLSQIRAWSTEHLIDAAGYWTETADRWEDVFLQMRNQAHAIA). A disordered region spans residues 186–227 (FKQDGPTPPPPGAPHPSGGADGPYSDPITSMMLPPAGTEAPV). The next 2 membrane-spanning stretches (helical) occupy residues 269–289 (SAEW…VVGT) and 290–310 (ALAI…LLGV).

The protein localises to the cell membrane. This is an uncharacterized protein from Mycobacterium tuberculosis (strain CDC 1551 / Oshkosh).